The sequence spans 137 residues: Ribosome-binding factor A (137 aa).

It belongs to the RbfA family. In terms of assembly, monomer. Binds 30S ribosomal subunits, but not 50S ribosomal subunits or 70S ribosomes.

It localises to the cytoplasm. Functionally, one of several proteins that assist in the late maturation steps of the functional core of the 30S ribosomal subunit. Associates with free 30S ribosomal subunits (but not with 30S subunits that are part of 70S ribosomes or polysomes). Required for efficient processing of 16S rRNA. May interact with the 5'-terminal helix region of 16S rRNA. The protein is Ribosome-binding factor A of Synechococcus sp. (strain ATCC 27144 / PCC 6301 / SAUG 1402/1) (Anacystis nidulans).